Here is a 129-residue protein sequence, read N- to C-terminus: Glycine cleavage system H protein (129 aa).

One can recognise a Lipoyl-binding domain in the interval 24-106 (TFTVGISEHA…YGDGWLFRIK (83 aa)). K65 carries the post-translational modification N6-lipoyllysine.

This sequence belongs to the GcvH family. As to quaternary structure, the glycine cleavage system is composed of four proteins: P, T, L and H. (R)-lipoate serves as cofactor.

Its function is as follows. The glycine cleavage system catalyzes the degradation of glycine. The H protein shuttles the methylamine group of glycine from the P protein to the T protein. This Pseudoalteromonas atlantica (strain T6c / ATCC BAA-1087) protein is Glycine cleavage system H protein.